Consider the following 531-residue polypeptide: Putative UDP-glucuronosyltransferase ugt-46 (531 aa).

Positions 1-17 (MRLIFVLLATFVNAAFS) are cleaved as a signal peptide. N-linked (GlcNAc...) asparagine glycosylation is present at Asn304. The helical transmembrane segment at 493 to 513 (VIIPVFWLSISLVIPTIFGWY) threads the bilayer.

Belongs to the UDP-glycosyltransferase family.

It is found in the membrane. It catalyses the reaction glucuronate acceptor + UDP-alpha-D-glucuronate = acceptor beta-D-glucuronoside + UDP + H(+). The chain is Putative UDP-glucuronosyltransferase ugt-46 (ugt-46) from Caenorhabditis elegans.